Reading from the N-terminus, the 222-residue chain is Glutathione-specific gamma-glutamylcyclotransferase 1 (222 aa).

The segment at 1-25 (MKQESAAQSTPPPSLSPAPSAQPSW) is disordered. Substrate is bound at residue 35–40 (IFGYGS). Residue E115 is the Proton acceptor of the active site.

This sequence belongs to the gamma-glutamylcyclotransferase family. ChaC subfamily. In terms of assembly, interacts with NOTCH1 (via extracellular region).

The protein localises to the cytoplasm. The protein resides in the cytosol. It localises to the golgi apparatus. Its subcellular location is the trans-Golgi network. It catalyses the reaction glutathione = L-cysteinylglycine + 5-oxo-L-proline. Catalyzes the cleavage of glutathione into 5-oxo-L-proline and a Cys-Gly dipeptide. Acts specifically on glutathione, but not on other gamma-glutamyl peptides. Glutathione depletion is an important factor for apoptosis initiation and execution. Acts as a pro-apoptotic component of the unfolded protein response pathway by mediating the pro-apoptotic effects of the ATF4-ATF3-DDIT3/CHOP cascade. Negative regulator of Notch signaling pathway involved in embryonic neurogenesis: acts by inhibiting Notch cleavage by furin, maintaining Notch in an immature inactive form, thereby promoting neurogenesis in embryos. The protein is Glutathione-specific gamma-glutamylcyclotransferase 1 of Rattus norvegicus (Rat).